The chain runs to 229 residues: Enolase-phosphatase E1 (229 aa).

Belongs to the HAD-like hydrolase superfamily. MasA/MtnC family. In terms of assembly, monomer. Mg(2+) is required as a cofactor.

It catalyses the reaction 5-methylsulfanyl-2,3-dioxopentyl phosphate + H2O = 1,2-dihydroxy-5-(methylsulfanyl)pent-1-en-3-one + phosphate. It functions in the pathway amino-acid biosynthesis; L-methionine biosynthesis via salvage pathway; L-methionine from S-methyl-5-thio-alpha-D-ribose 1-phosphate: step 3/6. It participates in amino-acid biosynthesis; L-methionine biosynthesis via salvage pathway; L-methionine from S-methyl-5-thio-alpha-D-ribose 1-phosphate: step 4/6. Functionally, bifunctional enzyme that catalyzes the enolization of 2,3-diketo-5-methylthiopentyl-1-phosphate (DK-MTP-1-P) into the intermediate 2-hydroxy-3-keto-5-methylthiopentenyl-1-phosphate (HK-MTPenyl-1-P), which is then dephosphorylated to form the acireductone 1,2-dihydroxy-3-keto-5-methylthiopentene (DHK-MTPene). The chain is Enolase-phosphatase E1 from Erwinia tasmaniensis (strain DSM 17950 / CFBP 7177 / CIP 109463 / NCPPB 4357 / Et1/99).